Consider the following 498-residue polypeptide: Lysine--tRNA ligase (498 aa).

Mg(2+) is bound by residues Glu-408 and Glu-415.

The protein belongs to the class-II aminoacyl-tRNA synthetase family. As to quaternary structure, homodimer. It depends on Mg(2+) as a cofactor.

It is found in the cytoplasm. The enzyme catalyses tRNA(Lys) + L-lysine + ATP = L-lysyl-tRNA(Lys) + AMP + diphosphate. This Listeria welshimeri serovar 6b (strain ATCC 35897 / DSM 20650 / CCUG 15529 / CIP 8149 / NCTC 11857 / SLCC 5334 / V8) protein is Lysine--tRNA ligase.